Reading from the N-terminus, the 185-residue chain is Serine/arginine-rich splicing factor RSZ21A (185 aa).

An RRM domain is found at 2 to 73 (ARVYVGNLDP…WRVELSRNAS (72 aa)). The CCHC-type zinc finger occupies 87-104 (SKCYECGETGHFARECRL). The segment at 109-185 (GGLGSGRRRS…YDNGYRRSRS (77 aa)) is disordered. The span at 114–131 (GRRRSRSRSRSRSPRYRR) shows a compositional bias: basic residues. Low complexity-rich tracts occupy residues 132-145 (SPSYGRRSYSPAGR) and 152-163 (VSPARARSYSRS).

Belongs to the splicing factor SR family. Extensively phosphorylated on serine residues in the RS domain. Expressed in roots, leaves and immature seeds.

Its subcellular location is the nucleus. In terms of biological role, involved in pre-mRNA splicing. This chain is Serine/arginine-rich splicing factor RSZ21A (RSZ21A), found in Oryza sativa subsp. japonica (Rice).